The primary structure comprises 421 residues: Aspartokinase (421 aa).

Residue 7 to 10 (KYGG) participates in ATP binding. 25–30 (RIVATK) contributes to the substrate binding site. S41 lines the ATP pocket. Substrate-binding positions include 45 to 49 (DTTDE), E74, 125 to 126 (LD), 151 to 154 (RGGS), and S154. Residues 174–175 (SD), 180–185 (YTADPR), and K210 contribute to the ATP site. ACT domains are found at residues 267–343 (VTVL…YDDQ) and 349–421 (LVGA…GTGR). Residues D274, 274-279 (DKPGEA), 292-294 (NID), Q298, 360-361 (VT), 374-375 (NV), and 381-382 (SE) each bind substrate.

This sequence belongs to the aspartokinase family. In terms of assembly, tetramer consisting of 2 isoforms Alpha (catalytic and regulation) and of a homodimer of 2 isoforms Beta (regulation).

It catalyses the reaction L-aspartate + ATP = 4-phospho-L-aspartate + ADP. The protein operates within amino-acid biosynthesis; L-lysine biosynthesis via DAP pathway; (S)-tetrahydrodipicolinate from L-aspartate: step 1/4. It participates in amino-acid biosynthesis; L-methionine biosynthesis via de novo pathway; L-homoserine from L-aspartate: step 1/3. It functions in the pathway amino-acid biosynthesis; L-threonine biosynthesis; L-threonine from L-aspartate: step 1/5. Catalyzes the phosphorylation of the beta-carboxyl group of aspartic acid with ATP to yield 4-phospho-L-aspartate, which is involved in the branched biosynthetic pathway leading to the biosynthesis of amino acids lysine, threonine, isoleucine and methionine. The polypeptide is Aspartokinase (lysC) (Corynebacterium efficiens (strain DSM 44549 / YS-314 / AJ 12310 / JCM 11189 / NBRC 100395)).